The chain runs to 338 residues: uncharacterized protein (338 aa).

Residues 1-29 form the signal peptide; sequence MIKQLCKNITICTLALSTTFTVLPATSFA.

The protein belongs to the aerolysin family.

This is an uncharacterized protein from Staphylococcus aureus (strain USA300).